Here is a 561-residue protein sequence, read N- to C-terminus: Putative ABC transporter ATP-binding protein SAV_5847 (561 aa).

Positions I2–L243 constitute an ABC transporter 1 domain. G36–S43 provides a ligand contact to ATP. The segment at E268–R299 is disordered. Residues A272–P288 are compositionally biased toward low complexity. The ABC transporter 2 domain maps to A315–K543. G347–S354 contacts ATP.

It belongs to the ABC transporter superfamily.

Its subcellular location is the cell membrane. In terms of biological role, probably part of an ABC transporter complex. Responsible for energy coupling to the transport system. The polypeptide is Putative ABC transporter ATP-binding protein SAV_5847 (Streptomyces avermitilis (strain ATCC 31267 / DSM 46492 / JCM 5070 / NBRC 14893 / NCIMB 12804 / NRRL 8165 / MA-4680)).